A 156-amino-acid polypeptide reads, in one-letter code: MVAKVFYMCPIDYKDILTLDLETRSVGIRKCDHVFGYIIPPSHSVREDEICPKQYRIRSWHIGKAIYGVCISFENGVKYVVRDIKKLKEILEELLNYPKDQIIYFILGEFEREKIIDMIKDMIKDMFVGYKANNEFCTPKTITIIGVLNKVTIYFL.

This is an uncharacterized protein from Saccharolobus islandicus (Sulfolobus islandicus).